Here is an 892-residue protein sequence, read N- to C-terminus: Protein argonaute 11 (892 aa).

The segment covering 1–17 (MSSRGGGVGGRRGGPGG) has biased composition (gly residues). 2 disordered regions span residues 1–68 (MSSR…ALQP) and 86–117 (MEAR…GALP). Over residues 86–107 (MEAREGASSSSSASAPAVGEVE) the composition is skewed to low complexity. The PAZ domain occupies 248–362 (SLKQFLAGTY…LPMEVCRIVK (115 aa)). The region spanning 541-848 (LLVIVLPDAN…AASRARHYLE (308 aa)) is the Piwi domain. The segment at 850–876 (GSLPDHGSSSASAAGGSRRNDRGVPVK) is disordered. Low complexity predominate over residues 856–866 (GSSSASAAGGS). Positions 867–876 (RRNDRGVPVK) are enriched in basic and acidic residues.

The protein belongs to the argonaute family. Ago subfamily.

In terms of biological role, probably involved in the RNA silencing pathway. May bind to short RNAs such as microRNAs (miRNAs) or short interfering RNAs (siRNAs), and represses the translation of mRNAs which are complementary to them. This chain is Protein argonaute 11 (AGO11), found in Oryza sativa subsp. japonica (Rice).